A 579-amino-acid polypeptide reads, in one-letter code: Nuclear receptor coactivator 5 (579 aa).

N-acetylmethionine is present on Met-1. Residues 1 to 78 (MNTAPSRPSP…LRDHRDSRSV (78 aa)) form a disordered region. Positions 1–158 (MNTAPSRPSP…RDSFDGRGPP (158 aa)) are transcription repression. Thr-3 is modified (phosphothreonine). Phosphoserine is present on residues Ser-9, Ser-21, Ser-24, Ser-29, and Ser-34. Basic and acidic residues-rich tracts occupy residues 11-62 (TRRD…DLRD) and 68-78 (DLRDHRDSRSV). Residues Ser-96, Ser-116, Ser-126, Ser-143, and Ser-151 each carry the phosphoserine modification. The interval 148 to 173 (YRDSFDGRGPPGPESQSRAKERLKRE) is disordered. A compositionally biased stretch (basic and acidic residues) spans 164–173 (SRAKERLKRE). Thr-274 is subject to Phosphothreonine. Positions 345-349 (LINLL) match the LXXLL motif motif. Disordered regions lie at residues 375-428 (MRSS…PTSQ), 444-537 (VTAN…NFDN), and 560-579 (QTTA…QRHY). The residue at position 378 (Ser-378) is a Phosphoserine. Thr-379 is subject to Phosphothreonine. Ser-381 is modified (phosphoserine). Residues 395–413 (SGASLKTQPSSQPLQSGQV) are compositionally biased toward polar residues. A compositionally biased stretch (low complexity) spans 446-457 (ANSSSASPSVAA). Residues 458–579 (GNTPNQNFST…APMGSYQRHY (122 aa)) form a transcription activation region. Polar residues-rich tracts occupy residues 459 to 485 (NTPN…NQPP) and 520 to 537 (SNMT…NFDN).

As to quaternary structure, binds HTATIP2/TIP30. Interacts with YLPM1. Forms a complex with ILF2, ILF3, YLPM1, KHDRBS1, RBMX and PPP1CA. In terms of tissue distribution, widely expressed.

The protein resides in the nucleus. Nuclear receptor coregulator that can have both coactivator and corepressor functions. Interacts with nuclear receptors for steroids (ESR1 and ESR2) independently of the steroid binding domain (AF-2) of the ESR receptors, and with the orphan nuclear receptor NR1D2. Involved in the coactivation of nuclear steroid receptors (ER) as well as the corepression of MYC in response to 17-beta-estradiol (E2). In Homo sapiens (Human), this protein is Nuclear receptor coactivator 5 (NCOA5).